The following is a 79-amino-acid chain: Large ribosomal subunit protein uL24 (79 aa).

A disordered region spans residues 1-29 (MPKLKKLLLKVSTSKPNTNPPSQNEEKGT). Residues 11-23 (VSTSKPNTNPPSQ) show a composition bias toward polar residues.

The protein belongs to the universal ribosomal protein uL24 family. In terms of assembly, part of the 50S ribosomal subunit.

Functionally, one of two assembly initiator proteins, it binds directly to the 5'-end of the 23S rRNA, where it nucleates assembly of the 50S subunit. Its function is as follows. One of the proteins that surrounds the polypeptide exit tunnel on the outside of the subunit. The protein is Large ribosomal subunit protein uL24 (rplX) of Onion yellows phytoplasma (strain OY-M).